Consider the following 283-residue polypeptide: 4-diphosphocytidyl-2-C-methyl-D-erythritol kinase (283 aa).

The active site involves Lys-12. Residue 94–104 participates in ATP binding; that stretch reads PAQAGLGGGSS. Residue Asp-136 is part of the active site.

Belongs to the GHMP kinase family. IspE subfamily.

The catalysed reaction is 4-CDP-2-C-methyl-D-erythritol + ATP = 4-CDP-2-C-methyl-D-erythritol 2-phosphate + ADP + H(+). Its pathway is isoprenoid biosynthesis; isopentenyl diphosphate biosynthesis via DXP pathway; isopentenyl diphosphate from 1-deoxy-D-xylulose 5-phosphate: step 3/6. Catalyzes the phosphorylation of the position 2 hydroxy group of 4-diphosphocytidyl-2C-methyl-D-erythritol. In Acidovorax ebreus (strain TPSY) (Diaphorobacter sp. (strain TPSY)), this protein is 4-diphosphocytidyl-2-C-methyl-D-erythritol kinase.